Reading from the N-terminus, the 162-residue chain is UPF0262 protein Acry_0160 (162 aa).

It belongs to the UPF0262 family.

The polypeptide is UPF0262 protein Acry_0160 (Acidiphilium cryptum (strain JF-5)).